The sequence spans 345 residues: Phosphoribosylformylglycinamidine cyclo-ligase (345 aa).

This sequence belongs to the AIR synthase family.

Its subcellular location is the cytoplasm. It carries out the reaction 2-formamido-N(1)-(5-O-phospho-beta-D-ribosyl)acetamidine + ATP = 5-amino-1-(5-phospho-beta-D-ribosyl)imidazole + ADP + phosphate + H(+). It functions in the pathway purine metabolism; IMP biosynthesis via de novo pathway; 5-amino-1-(5-phospho-D-ribosyl)imidazole from N(2)-formyl-N(1)-(5-phospho-D-ribosyl)glycinamide: step 2/2. The sequence is that of Phosphoribosylformylglycinamidine cyclo-ligase from Cronobacter sakazakii (strain ATCC BAA-894) (Enterobacter sakazakii).